Consider the following 355-residue polypeptide: Dihydroorotate dehydrogenase (quinone) (355 aa).

Residues 68–72 (AGFDK) and threonine 92 each bind FMN. Lysine 72 provides a ligand contact to substrate. A substrate-binding site is contributed by 117-121 (NRMGF). The FMN site is built by asparagine 154 and asparagine 190. Residue asparagine 190 participates in substrate binding. Serine 193 serves as the catalytic Nucleophile. Asparagine 195 provides a ligand contact to substrate. 2 residues coordinate FMN: lysine 232 and threonine 260. 261–262 (NT) serves as a coordination point for substrate. Residues glycine 286, glycine 315, and 336–337 (YS) each bind FMN.

Belongs to the dihydroorotate dehydrogenase family. Type 2 subfamily. In terms of assembly, monomer. The cofactor is FMN.

The protein resides in the cell membrane. It carries out the reaction (S)-dihydroorotate + a quinone = orotate + a quinol. It participates in pyrimidine metabolism; UMP biosynthesis via de novo pathway; orotate from (S)-dihydroorotate (quinone route): step 1/1. Functionally, catalyzes the conversion of dihydroorotate to orotate with quinone as electron acceptor. In Nocardioides sp. (strain ATCC BAA-499 / JS614), this protein is Dihydroorotate dehydrogenase (quinone).